A 475-amino-acid polypeptide reads, in one-letter code: Doublecortin domain-containing protein 2 (475 aa).

2 consecutive Doublecortin domains span residues 17-100 (KSVL…LNYL) and 139-221 (CTIF…LPYS). A disordered region spans residues 234 to 475 (YGQKASSLPP…ESNKASSAVA (242 aa)). Polar residues predominate over residues 252 to 272 (GSGNYRQSKSTIGSSDNSSPQ). Ser270 carries the phosphoserine modification. A compositionally biased stretch (basic and acidic residues) spans 353–365 (EKTSKDANQKDDF). The span at 407-419 (TDEENGEELDQVT) shows a compositional bias: acidic residues. The segment covering 455–475 (TVTSPQENEGNESNKASSAVA) has biased composition (polar residues).

As to quaternary structure, interacts with DVL1, DVL2 and DVL3. As to expression, expressed in hair cells of the inner ear.

Its subcellular location is the cell projection. The protein resides in the cilium. The protein localises to the cytoplasm. It localises to the cytoskeleton. It is found in the cilium axoneme. Its subcellular location is the kinocilium. Protein that plays a role in the inhibition of canonical Wnt signaling pathway. May be involved in neuronal migration during development of the cerebral neocortex. Involved in the control of ciliogenesis and ciliary length. This is Doublecortin domain-containing protein 2 (Dcdc2) from Rattus norvegicus (Rat).